Reading from the N-terminus, the 951-residue chain is Bifunctional glutamine synthetase adenylyltransferase/adenylyl-removing enzyme (951 aa).

The adenylyl removase stretch occupies residues 1–440 (MLPLPSELQI…VFDDLIGDET (440 aa)). The tract at residues 449–951 (HGLYKSLWQD…WLAANDANVS (503 aa)) is adenylyl transferase.

The protein belongs to the GlnE family. Mg(2+) is required as a cofactor.

The catalysed reaction is [glutamine synthetase]-O(4)-(5'-adenylyl)-L-tyrosine + phosphate = [glutamine synthetase]-L-tyrosine + ADP. It carries out the reaction [glutamine synthetase]-L-tyrosine + ATP = [glutamine synthetase]-O(4)-(5'-adenylyl)-L-tyrosine + diphosphate. Functionally, involved in the regulation of glutamine synthetase GlnA, a key enzyme in the process to assimilate ammonia. When cellular nitrogen levels are high, the C-terminal adenylyl transferase (AT) inactivates GlnA by covalent transfer of an adenylyl group from ATP to specific tyrosine residue of GlnA, thus reducing its activity. Conversely, when nitrogen levels are low, the N-terminal adenylyl removase (AR) activates GlnA by removing the adenylyl group by phosphorolysis, increasing its activity. The regulatory region of GlnE binds the signal transduction protein PII (GlnB) which indicates the nitrogen status of the cell. This chain is Bifunctional glutamine synthetase adenylyltransferase/adenylyl-removing enzyme, found in Yersinia pestis bv. Antiqua (strain Antiqua).